Here is an 83-residue protein sequence, read N- to C-terminus: Cytochrome c oxidase subunit 7A2, mitochondrial (83 aa).

The N-terminal 23 residues, Met1–His23, are a transit peptide targeting the mitochondrion. Residues Phe24 to Gly48 are Mitochondrial matrix-facing. At Lys33 the chain carries N6-acetyllysine. Residues Val49–Ser77 traverse the membrane as a helical segment. The Mitochondrial intermembrane portion of the chain corresponds to Phe78–Glu83.

The protein belongs to the cytochrome c oxidase VIIa family. In terms of assembly, component of the cytochrome c oxidase (complex IV, CIV), a multisubunit enzyme composed of 14 subunits. The complex is composed of a catalytic core of 3 subunits MT-CO1, MT-CO2 and MT-CO3, encoded in the mitochondrial DNA, and 11 supernumerary subunits COX4I1 (or COX4I2), COX5A, COX5B, COX6A1 (or COX6A2), COX6B1 (or COX6B2), COX6C, COX7A2 (or COX7A1), COX7B, COX7C, COX8A and NDUFA4, which are encoded in the nuclear genome. The complex exists as a monomer or a dimer and forms supercomplexes (SCs) in the inner mitochondrial membrane with NADH-ubiquinone oxidoreductase (complex I, CI) and ubiquinol-cytochrome c oxidoreductase (cytochrome b-c1 complex, complex III, CIII), resulting in different assemblies (supercomplex SCI(1)III(2)IV(1) and megacomplex MCI(2)III(2)IV(2)). Interacts with PET100.

Its subcellular location is the mitochondrion inner membrane. It functions in the pathway energy metabolism; oxidative phosphorylation. In terms of biological role, component of the cytochrome c oxidase, the last enzyme in the mitochondrial electron transport chain which drives oxidative phosphorylation. The respiratory chain contains 3 multisubunit complexes succinate dehydrogenase (complex II, CII), ubiquinol-cytochrome c oxidoreductase (cytochrome b-c1 complex, complex III, CIII) and cytochrome c oxidase (complex IV, CIV), that cooperate to transfer electrons derived from NADH and succinate to molecular oxygen, creating an electrochemical gradient over the inner membrane that drives transmembrane transport and the ATP synthase. Cytochrome c oxidase is the component of the respiratory chain that catalyzes the reduction of oxygen to water. Electrons originating from reduced cytochrome c in the intermembrane space (IMS) are transferred via the dinuclear copper A center (CU(A)) of subunit 2 and heme A of subunit 1 to the active site in subunit 1, a binuclear center (BNC) formed by heme A3 and copper B (CU(B)). The BNC reduces molecular oxygen to 2 water molecules using 4 electrons from cytochrome c in the IMS and 4 protons from the mitochondrial matrix. In Homo sapiens (Human), this protein is Cytochrome c oxidase subunit 7A2, mitochondrial (COX7A2).